Reading from the N-terminus, the 157-residue chain is MAMSPYIFIVLILIILSMYRERTVKPGKLLIIPLLLLWGVSASFQPAYFHSVLHVAISGILLLIGLACGFGIGKMVNVRIHPETGKVTSRGSLGSVILILVILSLRMAARTWLPESNEMFIAIIHSMFFVPLGTITARNIMLYKAYRRLTAGKVSIQ.

Helical transmembrane passes span 29–49 (LLIIPLLLLWGVSASFQPAYF), 52–72 (VLHVAISGILLLIGLACGFGI), 93–113 (LGSVILILVILSLRMAARTWL), and 117–137 (NEMFIAIIHSMFFVPLGTITA).

The protein localises to the cell membrane. This is an uncharacterized protein from Bacillus subtilis (strain 168).